The chain runs to 570 residues: Acetolactate synthase (570 aa).

Glu-60 lines the thiamine diphosphate pocket. FAD-binding positions include Gln-162, 266–287 (FRNQPGDLLLEQADVVLTIGYD), and 308–327 (DEIIADIDHAYQPDLELIGD). Positions 399–479 (SHAIWMSRYF…IVHIVWNDST (81 aa)) are thiamine pyrophosphate binding. Position 450 (Asp-450) interacts with Mg(2+).

Belongs to the TPP enzyme family. It depends on Mg(2+) as a cofactor. Thiamine diphosphate serves as cofactor.

It catalyses the reaction 2 pyruvate + H(+) = (2S)-2-acetolactate + CO2. The protein operates within polyol metabolism; (R,R)-butane-2,3-diol biosynthesis; (R,R)-butane-2,3-diol from pyruvate: step 1/3. The polypeptide is Acetolactate synthase (alsS) (Bacillus subtilis (strain 168)).